A 351-amino-acid polypeptide reads, in one-letter code: Nicotinate-nucleotide--dimethylbenzimidazole phosphoribosyltransferase (351 aa).

E315 functions as the Proton acceptor in the catalytic mechanism.

It belongs to the CobT family.

It carries out the reaction 5,6-dimethylbenzimidazole + nicotinate beta-D-ribonucleotide = alpha-ribazole 5'-phosphate + nicotinate + H(+). The protein operates within nucleoside biosynthesis; alpha-ribazole biosynthesis; alpha-ribazole from 5,6-dimethylbenzimidazole: step 1/2. Its function is as follows. Catalyzes the synthesis of alpha-ribazole-5'-phosphate from nicotinate mononucleotide (NAMN) and 5,6-dimethylbenzimidazole (DMB). This is Nicotinate-nucleotide--dimethylbenzimidazole phosphoribosyltransferase from Acetivibrio thermocellus (strain ATCC 27405 / DSM 1237 / JCM 9322 / NBRC 103400 / NCIMB 10682 / NRRL B-4536 / VPI 7372) (Clostridium thermocellum).